Here is a 98-residue protein sequence, read N- to C-terminus: Acylphosphatase (98 aa).

The 87-residue stretch at 12–98 (TYYVRVRGVV…EKRFERFQQQ (87 aa)) folds into the Acylphosphatase-like domain. Catalysis depends on residues R27 and N45.

The protein belongs to the acylphosphatase family.

It catalyses the reaction an acyl phosphate + H2O = a carboxylate + phosphate + H(+). The sequence is that of Acylphosphatase (acyP) from Burkholderia cenocepacia (strain HI2424).